We begin with the raw amino-acid sequence, 347 residues long: Ribosomal RNA small subunit methyltransferase C (347 aa).

It belongs to the methyltransferase superfamily. RsmC family. In terms of assembly, monomer.

Its subcellular location is the cytoplasm. It carries out the reaction guanosine(1207) in 16S rRNA + S-adenosyl-L-methionine = N(2)-methylguanosine(1207) in 16S rRNA + S-adenosyl-L-homocysteine + H(+). Functionally, specifically methylates the guanine in position 1207 of 16S rRNA in the 30S particle. The sequence is that of Ribosomal RNA small subunit methyltransferase C from Shewanella baltica (strain OS155 / ATCC BAA-1091).